The following is a 286-amino-acid chain: Pantothenate synthetase (286 aa).

30-37 (MGFLHEGH) is an ATP binding site. His37 serves as the catalytic Proton donor. Residue Gln61 coordinates (R)-pantoate. Residue Gln61 coordinates beta-alanine. 147 to 150 (GLKD) provides a ligand contact to ATP. A (R)-pantoate-binding site is contributed by Gln153. Residues Val176 and 184–187 (KSSR) each bind ATP.

Belongs to the pantothenate synthetase family. As to quaternary structure, homodimer.

It is found in the cytoplasm. The enzyme catalyses (R)-pantoate + beta-alanine + ATP = (R)-pantothenate + AMP + diphosphate + H(+). The protein operates within cofactor biosynthesis; (R)-pantothenate biosynthesis; (R)-pantothenate from (R)-pantoate and beta-alanine: step 1/1. Its function is as follows. Catalyzes the condensation of pantoate with beta-alanine in an ATP-dependent reaction via a pantoyl-adenylate intermediate. The protein is Pantothenate synthetase of Bacillus velezensis (strain DSM 23117 / BGSC 10A6 / LMG 26770 / FZB42) (Bacillus amyloliquefaciens subsp. plantarum).